The primary structure comprises 269 residues: Chymotrypsin-like elastase family member 2A (269 aa).

The N-terminal stretch at 1–16 (MIRALLLSTLVAGALS) is a signal peptide. Residues 17-28 (CGLPANLPQLPR) constitute a propeptide, activation peptide. The 239-residue stretch at 29-267 (VVGGEDARPN…YIDWINSVIA (239 aa)) folds into the Peptidase S1 domain. A disulfide bridge links Cys-58 with Cys-74. Active-site charge relay system residues include His-73 and Asp-121. Disulfide bonds link Cys-155/Cys-222, Cys-186/Cys-202, and Cys-212/Cys-243. Ser-216 (charge relay system) is an active-site residue.

Belongs to the peptidase S1 family. Elastase subfamily. Interacts with CPA1. Interacts with SERPINA1. As to expression, pancreas.

The protein localises to the secreted. It carries out the reaction Preferential cleavage: Leu-|-Xaa, Met-|-Xaa and Phe-|-Xaa. Hydrolyzes elastin.. Functionally, elastase that enhances insulin signaling and might have a physiologic role in cellular glucose metabolism. Circulates in plasma and reduces platelet hyperactivation, triggers both insulin secretion and degradation, and increases insulin sensitivity. In Sus scrofa (Pig), this protein is Chymotrypsin-like elastase family member 2A (CELA2A).